Consider the following 271-residue polypeptide: MQAACWYVLLLLQPTIYLVTCANLTNGGKSELLKSGSSKSTLKHIWTESSKDLSISRLLSQTFRGKENDTDLDLRYDTPEPYSEQDLWDWLRNSTDLQEPRPRAKRRPIVKTGKFKKMFGWGDFHSNIKTVKLNLLITGKIVDHGNGTFSVYFRHNSTGQGNVSVSLVPPTKIVEFDLAQQTVIDAKDSKSFNCRIEYEKVDKATKNTLCNYDPSKTCYQEQTQSHVSWLCSKPFKVICIYISFYSTDYKLVQKVCPDYNYHSDTPYFPSG.

The N-terminal stretch at 1 to 21 is a signal peptide; sequence MQAACWYVLLLLQPTIYLVTC. An II region spans residues 22–97; the sequence is ANLTNGGKSE…WDWLRNSTDL (76 aa). Residues N23, N68, N93, N146, N156, and N162 are each glycosylated (N-linked (GlcNAc...) asparagine). An III region spans residues 98-176; sequence QEPRPRAKRR…LVPPTKIVEF (79 aa). Residues 177–185 form an IV (linker domain) region; that stretch reads DLAQQTVID. Residues 186-271 are v (Cys-rich); it reads AKDSKSFNCR…HSDTPYFPSG (86 aa).

It belongs to the neurexophilin family.

It localises to the secreted. Functionally, may be signaling molecules that resemble neuropeptides and that act by binding to alpha-neurexins and possibly other receptors. In Pongo abelii (Sumatran orangutan), this protein is Neurexophilin-1 (NXPH1).